Consider the following 647-residue polypeptide: Threonine--tRNA ligase (647 aa).

A TGS domain is found at 1–61 (MINITFPDGA…TEDGSIEIVT (61 aa)). The segment at 242–540 (DHRKLGKELD…LIENYKGAFP (299 aa)) is catalytic. Residues cysteine 336, histidine 387, and histidine 517 each coordinate Zn(2+).

Belongs to the class-II aminoacyl-tRNA synthetase family. Homodimer. Zn(2+) is required as a cofactor.

Its subcellular location is the cytoplasm. It catalyses the reaction tRNA(Thr) + L-threonine + ATP = L-threonyl-tRNA(Thr) + AMP + diphosphate + H(+). Its function is as follows. Catalyzes the attachment of threonine to tRNA(Thr) in a two-step reaction: L-threonine is first activated by ATP to form Thr-AMP and then transferred to the acceptor end of tRNA(Thr). Also edits incorrectly charged L-seryl-tRNA(Thr). The protein is Threonine--tRNA ligase of Streptococcus pneumoniae serotype 4 (strain ATCC BAA-334 / TIGR4).